A 198-amino-acid polypeptide reads, in one-letter code: Imidazoleglycerol-phosphate dehydratase (198 aa).

The protein belongs to the imidazoleglycerol-phosphate dehydratase family.

The protein resides in the cytoplasm. It catalyses the reaction D-erythro-1-(imidazol-4-yl)glycerol 3-phosphate = 3-(imidazol-4-yl)-2-oxopropyl phosphate + H2O. The protein operates within amino-acid biosynthesis; L-histidine biosynthesis; L-histidine from 5-phospho-alpha-D-ribose 1-diphosphate: step 6/9. This is Imidazoleglycerol-phosphate dehydratase from Magnetococcus marinus (strain ATCC BAA-1437 / JCM 17883 / MC-1).